We begin with the raw amino-acid sequence, 424 residues long: Putative chloroquine resistance transporter (424 aa).

Topologically, residues 1–56 (MTVIKKGKNKKKNLKNDDRYKELDSLITNGSEIGDNSGRSCIKRFFKIIGNEMKNN) are cytoplasmic. The helical transmembrane segment at 57–77 (VYVYFLSILYLCVCVMNKVFA) threads the bilayer. The Vacuolar segment spans residues 78–88 (KRTLNKMGNYS). Asn86 is a glycosylation site (N-linked (GlcNAc...) asparagine). The helical transmembrane segment at 89-109 (FVTSETHNIICIVVFQLLYFI) threads the bilayer. The Cytoplasmic segment spans residues 110–125 (YRKTSTSGYKNESQKN). Residues 126-146 (FGWQFFLISLLDASTVIISMI) form a helical membrane-spanning segment. The Vacuolar segment spans residues 147-156 (GLTRTTGNIQ). A helical membrane pass occupies residues 157–177 (SFIMQLIIPVNMYFCFMFLGY). Residues 178-180 (RYH) are Cytoplasmic-facing. Residues 181–201 (LFNYLGAFIILITIAVVETFL) form a helical membrane-spanning segment. Residues 202 to 209 (SFETQSEN) lie on the Vacuolar side of the membrane. Residues 210–230 (SIIFNLIMISALIPLSFSNMT) form a helical membrane-spanning segment. The Cytoplasmic segment spans residues 231-248 (REVVFKKHKINILRLNAM). The chain crosses the membrane as a helical span at residues 249–269 (VVLFQFFTSLLVLPVYNIPFL). Topologically, residues 270–317 (KEIYMPFSEMSTNINNGLRCLFYGQNTVVENCGVGMVKMCDNCEGAWK) are vacuolar. Intrachain disulfides connect Cys289–Cys312 and Cys301–Cys309. Residues 318-338 (TFITFSFFNICDNLLACYIID) traverse the membrane as a helical segment. Residues 339–346 (KFSTMTYT) are Cytoplasmic-facing. The chain crosses the membrane as a helical span at residues 347 to 367 (IVSCIQGPAITIAYYFKFLAG). Residues 368-377 (DAVRKPRILD) are Vacuolar-facing. The helical transmembrane segment at 378–398 (FLTLFGYLFGTIIYRIGNIIL) threads the bilayer. The Cytoplasmic portion of the chain corresponds to 399–424 (EKKKMVKSQNSNDSEAELTCIETSTA).

This sequence belongs to the CRT-like transporter family.

It localises to the vacuole membrane. In terms of biological role, nutrient transporter. Involved in maintaining the osmotic homeostasis of the digestive vacuole. The sequence is that of Putative chloroquine resistance transporter from Plasmodium yoelii yoelii.